Reading from the N-terminus, the 580-residue chain is TRAF-type zinc finger domain-containing protein 1 (580 aa).

A2 is modified (N-acetylalanine). A TRAF-type zinc finger spans residues 27–103 (IHEIHCQRNI…DLELSVLKLK (77 aa)). Phosphoserine is present on S190. The segment covering 197 to 209 (TTNQRSMTAQFPI) has biased composition (polar residues). The tract at residues 197–236 (TTNQRSMTAQFPIQNNLLEEQERQERNRSRQTPKERGEDS) is disordered. Over residues 216-235 (EQERQERNRSRQTPKERGED) the composition is skewed to basic and acidic residues. 3 positions are modified to phosphoserine: S326, S414, and S429. The segment at 392–580 (PATANNHVSE…GAGDAEEEEE (189 aa)) is disordered. Residues 409-419 (QPRETSPELPK) show a composition bias toward basic and acidic residues. The segment covering 453 to 463 (PPNNTTAPPNR) has biased composition (low complexity). Residue S469 is modified to Phosphoserine.

Interacts with MAVS, TICAM1, TRAF1, TRAF2, TRAF3 and TRAF6.

Its function is as follows. Negative feedback regulator that controls excessive innate immune responses. Regulates both Toll-like receptor 4 (TLR4) and DDX58/RIG1-like helicases (RLH) pathways. May inhibit the LTR pathway by direct interaction with TRAF6 and attenuation of NF-kappa-B activation. May negatively regulate the RLH pathway downstream from MAVS and upstream of NF-kappa-B and IRF3. The protein is TRAF-type zinc finger domain-containing protein 1 (TRAFD1) of Bos taurus (Bovine).